Here is a 277-residue protein sequence, read N- to C-terminus: Probable endonuclease 4 (277 aa).

The Zn(2+) site is built by H67, H107, E142, D176, H179, H211, D224, H226, and E256.

This sequence belongs to the AP endonuclease 2 family. Zn(2+) is required as a cofactor.

It carries out the reaction Endonucleolytic cleavage to 5'-phosphooligonucleotide end-products.. Its function is as follows. Endonuclease IV plays a role in DNA repair. It cleaves phosphodiester bonds at apurinic or apyrimidinic (AP) sites, generating a 3'-hydroxyl group and a 5'-terminal sugar phosphate. The polypeptide is Probable endonuclease 4 (Akkermansia muciniphila (strain ATCC BAA-835 / DSM 22959 / JCM 33894 / BCRC 81048 / CCUG 64013 / CIP 107961 / Muc)).